The following is a 316-amino-acid chain: 2,3-dihydroxyphenylpropionate/2,3-dihydroxicinnamic acid 1,2-dioxygenase (316 aa).

The Proton donor role is filled by H115. The active-site Proton acceptor is the H180.

This sequence belongs to the LigB/MhpB extradiol dioxygenase family. In terms of assembly, homotetramer. It depends on Fe(2+) as a cofactor.

It carries out the reaction 3-(2,3-dihydroxyphenyl)propanoate + O2 = (2Z,4E)-2-hydroxy-6-oxonona-2,4-dienedioate + H(+). The enzyme catalyses (2E)-3-(2,3-dihydroxyphenyl)prop-2-enoate + O2 = (2Z,4E,7E)-2-hydroxy-6-oxonona-2,4,7-trienedioate + H(+). It functions in the pathway aromatic compound metabolism; 3-phenylpropanoate degradation. Functionally, catalyzes the non-heme iron(II)-dependent oxidative cleavage of 2,3-dihydroxyphenylpropionic acid and 2,3-dihydroxicinnamic acid into 2-hydroxy-6-ketononadienedioate and 2-hydroxy-6-ketononatrienedioate, respectively. The sequence is that of 2,3-dihydroxyphenylpropionate/2,3-dihydroxicinnamic acid 1,2-dioxygenase from Rhodococcus rhodochrous.